A 271-amino-acid chain; its full sequence is Aquaporin-1 (271 aa).

Over 1 to 11 (MASEFKKKIFW) the chain is Cytoplasmic. A helical transmembrane segment spans residues 12–29 (RAVVAEFLAMTLFIFISI). Topologically, residues 30–48 (GSALGFQYPVRNNQTSGAA) are extracellular. N-linked (GlcNAc...) asparagine glycosylation is present at Asn42. The helical transmembrane segment at 49 to 67 (QDNVKVSLAFGLSIATLAQ) threads the bilayer. Residues 68–70 (SVG) lie on the Cytoplasmic side of the membrane. An intramembrane segment occupies 71–84 (HISGAHLNPAVTLG). Positions 78 to 80 (NPA) match the NPA 1 motif. Topologically, residues 85 to 92 (LLLSCQIS) are cytoplasmic. A helical membrane pass occupies residues 93-111 (VLRAVMYIIAQCVGAIVAT). Residues 112-135 (AILSGITSSLPGNSLGLNSLAPGV) lie on the Extracellular side of the membrane. A helical transmembrane segment spans residues 136–155 (DSGQGLGIEIIGTLQLVLCV). At 156–165 (LATTDRRRRD) the chain is on the cytoplasmic side. The helical transmembrane segment at 166–183 (LGGSAPLAIGFSVALGHL) threads the bilayer. Over 184–188 (LAIDY) the chain is Extracellular. The stretch at 189 to 201 (TGCGINPARSFGS) is an intramembrane region. The short motif at 194–196 (NPA) is the NPA 2 element. At 202-208 (AVITHNF) the chain is on the extracellular side. Residues 209-226 (QDHWVFWVGPFIGGALAV) traverse the membrane as a helical segment. Residues 227 to 271 (LIYDFILAPRSSDLTDRVKVWTSGQVEEYDLDGDDINSRVEMKPK) are Cytoplasmic-facing. Ser249 carries the phosphoserine modification. Phosphotyrosine is present on Tyr255. A Phosphoserine modification is found at Ser264.

Belongs to the MIP/aquaporin (TC 1.A.8) family. As to quaternary structure, homotetramer; each monomer provides an independent water pore. Component of the ankyrin-1 complex in the erythrocyte, composed of ANK1, RHCE, RHAG, SLC4A1, EPB42, GYPA, GYPB and AQP1. Interacts with EPHB2; involved in endolymph production in the inner ear. Identified in a complex with STOM. Interacts (via the N-terminal) with ANK1 (via ANK 1-5 repeats). Interacts (via the C-terminal) with EPB42.

The protein localises to the cell membrane. The enzyme catalyses H2O(in) = H2O(out). It carries out the reaction nitric oxide(out) = nitric oxide(in). It catalyses the reaction CO2(out) = CO2(in). The catalysed reaction is glycerol(in) = glycerol(out). The enzyme catalyses H2O2(out) = H2O2(in). It carries out the reaction K(+)(in) = K(+)(out). It catalyses the reaction Na(+)(in) = Na(+)(out). Forms a water channel that facilitates the transport of water across cell membranes, playing a crucial role in water homeostasis in various tissues. Could also be permeable to small solutes including hydrogen peroxide, glycerol and gases such as amonnia (NH3), nitric oxide (NO) and carbon dioxide (CO2). Recruited to the ankyrin-1 complex, a multiprotein complex of the erythrocyte membrane, it could be part of a CO2 metabolon, linking facilitated diffusion of CO2 across the membrane, anion exchange of Cl(-)/HCO3(-) and interconversion of dissolved CO2 and carbonic acid in the cytosol. In vitro, it shows non-selective gated cation channel activity and may be permeable to cations like K(+) and Na(+) in vivo. This chain is Aquaporin-1, found in Sus scrofa (Pig).